We begin with the raw amino-acid sequence, 446 residues long: Phosphoglucosamine mutase (446 aa).

Residue S99 is the Phosphoserine intermediate of the active site. Mg(2+) is bound by residues S99, D242, D244, and D246. S99 carries the phosphoserine modification.

Belongs to the phosphohexose mutase family. It depends on Mg(2+) as a cofactor. Post-translationally, activated by phosphorylation.

The catalysed reaction is alpha-D-glucosamine 1-phosphate = D-glucosamine 6-phosphate. Its function is as follows. Catalyzes the conversion of glucosamine-6-phosphate to glucosamine-1-phosphate. In Campylobacter curvus (strain 525.92), this protein is Phosphoglucosamine mutase.